We begin with the raw amino-acid sequence, 126 residues long: Small ribosomal subunit protein uS13 (126 aa).

Residues 95-126 (NLPVHGQRTHTNARTRKGPRRAIAGKKKAGKK) form a disordered region.

It belongs to the universal ribosomal protein uS13 family. As to quaternary structure, part of the 30S ribosomal subunit. Forms a loose heterodimer with protein S19. Forms two bridges to the 50S subunit in the 70S ribosome.

Functionally, located at the top of the head of the 30S subunit, it contacts several helices of the 16S rRNA. In the 70S ribosome it contacts the 23S rRNA (bridge B1a) and protein L5 of the 50S subunit (bridge B1b), connecting the 2 subunits; these bridges are implicated in subunit movement. Contacts the tRNAs in the A and P-sites. The chain is Small ribosomal subunit protein uS13 from Frankia casuarinae (strain DSM 45818 / CECT 9043 / HFP020203 / CcI3).